The primary structure comprises 153 residues: Small ribosomal subunit protein uS19 (153 aa).

Positions 1–63 are unknown; that stretch reads MGFRGAWNKR…QEIWDEFRAF (63 aa). Residues 64–153 are small ribosomal subunit protein uS19; the sequence is VNKKAWVDPK…EKSAKVVKKK (90 aa).

This sequence belongs to the universal ribosomal protein uS19 family.

In terms of biological role, protein S19 forms a complex with S13 that binds strongly to the 16S ribosomal RNA. The sequence is that of Small ribosomal subunit protein uS19 from Hydrogenobaculum sp. (strain Y04AAS1).